Consider the following 282-residue polypeptide: Probable endonuclease 4 (282 aa).

Zn(2+) is bound by residues His-66, His-106, Glu-143, Asp-177, His-180, His-214, Asp-227, His-229, and Glu-259.

It belongs to the AP endonuclease 2 family. Zn(2+) serves as cofactor.

The enzyme catalyses Endonucleolytic cleavage to 5'-phosphooligonucleotide end-products.. Endonuclease IV plays a role in DNA repair. It cleaves phosphodiester bonds at apurinic or apyrimidinic (AP) sites, generating a 3'-hydroxyl group and a 5'-terminal sugar phosphate. The protein is Probable endonuclease 4 of Nitratidesulfovibrio vulgaris (strain ATCC 29579 / DSM 644 / CCUG 34227 / NCIMB 8303 / VKM B-1760 / Hildenborough) (Desulfovibrio vulgaris).